The sequence spans 474 residues: MSKKLHIKTWGCQMNEYDSSKMADLLGEYQGYTLTEDASEADILLLNTCSIREKAQEKVFHQLGRWKTLKDKNPNLIIGVGGCVASQEGKAIKDRAQCVDIIFGPQTLHRLPDMIEQVRRGDKAVIDISFPEIEKFDRLPEPRAEGPTAFVSIMEGCSKYCSFCVVPYTRGEEVSRPLDDIILEIAQLAEQGVREVNLLGQNVNAYRGATHDGSICSFAELLRFVAAIDGIDRIRFTTSHPIEFTQDIIDVYEDTPELVSFLHLPVQSGSDRILTAMKRGHMAIEYKSIIRRLRKAREGIQISSDFIIGFPGETKEDFADTMKLIEEIGFDHSFSFIYSARPGTPAADLPDNVDMEEKKQRLAILQDRITQQAMRYSRHMMGTVQRILVEGPSVKNPMELRGRTENNRVVNFEGLPKHIGTFVDVEIVDVYTNSLRGKFIRGEDEMDLRRSLRPSDILAKHKQDDDLGVTQFKP.

The MTTase N-terminal domain occupies 3–120 (KKLHIKTWGC…LPDMIEQVRR (118 aa)). [4Fe-4S] cluster-binding residues include Cys12, Cys49, Cys83, Cys157, Cys161, and Cys164. In terms of domain architecture, Radical SAM core spans 143 to 375 (RAEGPTAFVS…QDRITQQAMR (233 aa)). The 64-residue stretch at 378–441 (RHMMGTVQRI…TNSLRGKFIR (64 aa)) folds into the TRAM domain.

It belongs to the methylthiotransferase family. MiaB subfamily. In terms of assembly, monomer. [4Fe-4S] cluster is required as a cofactor.

The protein resides in the cytoplasm. It catalyses the reaction N(6)-dimethylallyladenosine(37) in tRNA + (sulfur carrier)-SH + AH2 + 2 S-adenosyl-L-methionine = 2-methylsulfanyl-N(6)-dimethylallyladenosine(37) in tRNA + (sulfur carrier)-H + 5'-deoxyadenosine + L-methionine + A + S-adenosyl-L-homocysteine + 2 H(+). Catalyzes the methylthiolation of N6-(dimethylallyl)adenosine (i(6)A), leading to the formation of 2-methylthio-N6-(dimethylallyl)adenosine (ms(2)i(6)A) at position 37 in tRNAs that read codons beginning with uridine. The protein is tRNA-2-methylthio-N(6)-dimethylallyladenosine synthase of Shewanella putrefaciens (strain CN-32 / ATCC BAA-453).